The following is a 403-amino-acid chain: MGKVWKQQMYPQYATYYYPQYLQAKQSLVPAHPMAPPSPSTTSSNNNSSSSSNSGWDQLSKTNLYIRGLPPNTTDQDLVKLCQPYGKIVSTKAILDKATNKCKGYGFVDFDSPAAAQKAVSALKASGVQAQMAKQQEQDPTNLYISNLPLSMDEQELENMLKPFGQVISTRVLRDSSGTSRGVGFARMESTEKCEAVIGHFNGKFIKTPPGVSAPTEPLLCKFADGGQKKRQNPNKYIPNGRPWPREGEAGMTLTYDPTTAALHNGFYPSPYSIATNRMITQTSLTPYIASPVSAYQVQSPSWMQPQPYILQHPGAVLTPSMEHTMSLQPASMISPLAQQMSHLSLGSTGTYMPATSAMQGAYLPQYTHMQTATVPVEEASGQQQVTVETSNDHSPYTFPPNK.

A disordered region spans residues 30 to 56 (PAHPMAPPSPSTTSSNNNSSSSSNSGW). Positions 40-54 (STTSSNNNSSSSSNS) are enriched in low complexity. RRM domains follow at residues 62 to 135 (TNLY…MAKQ) and 141 to 226 (TNLY…FADG). The residue at position 208 (threonine 208) is a Phosphothreonine.

Its subcellular location is the nucleus. Functionally, single-stranded DNA binding protein that interacts with the region upstream of the MYC gene. Binds specifically to the DNA sequence motif 5'-[AT]CT[AT][AT]T-3'. Probably has a role in DNA replication. This Rattus norvegicus (Rat) protein is RNA-binding motif, single-stranded-interacting protein 1.